A 344-amino-acid polypeptide reads, in one-letter code: DNA polymerase IV (344 aa).

The region spanning 2–183 (IMLIDFDYFF…IKINDIPGIG (182 aa)) is the UmuC domain. The Mg(2+) site is built by D6 and D105. E106 is an active-site residue.

Belongs to the DNA polymerase type-Y family. In terms of assembly, monomer. It depends on Mg(2+) as a cofactor.

Its subcellular location is the cytoplasm. The catalysed reaction is DNA(n) + a 2'-deoxyribonucleoside 5'-triphosphate = DNA(n+1) + diphosphate. Poorly processive, error-prone DNA polymerase involved in untargeted mutagenesis. Copies undamaged DNA at stalled replication forks, which arise in vivo from mismatched or misaligned primer ends. These misaligned primers can be extended by PolIV. Exhibits no 3'-5' exonuclease (proofreading) activity. May be involved in translesional synthesis. This chain is DNA polymerase IV, found in Picrophilus torridus (strain ATCC 700027 / DSM 9790 / JCM 10055 / NBRC 100828 / KAW 2/3).